The chain runs to 321 residues: tRNA(Ile)-lysidine synthase (321 aa).

Residue 21–26 (SYGSDS) participates in ATP binding.

It belongs to the tRNA(Ile)-lysidine synthase family.

The protein localises to the cytoplasm. The enzyme catalyses cytidine(34) in tRNA(Ile2) + L-lysine + ATP = lysidine(34) in tRNA(Ile2) + AMP + diphosphate + H(+). Its function is as follows. Ligates lysine onto the cytidine present at position 34 of the AUA codon-specific tRNA(Ile) that contains the anticodon CAU, in an ATP-dependent manner. Cytidine is converted to lysidine, thus changing the amino acid specificity of the tRNA from methionine to isoleucine. The polypeptide is tRNA(Ile)-lysidine synthase (Campylobacter jejuni subsp. jejuni serotype O:2 (strain ATCC 700819 / NCTC 11168)).